Reading from the N-terminus, the 466-residue chain is Muscarinic acetylcholine receptor M2 (466 aa).

The Extracellular portion of the chain corresponds to Met-1 to Glu-22. 3 N-linked (GlcNAc...) asparagine glycosylation sites follow: Asn-2, Asn-3, and Asn-6. Residues Val-23–Met-45 traverse the membrane as a helical segment. The Cytoplasmic portion of the chain corresponds to Val-46–Asn-59. The helical transmembrane segment at Tyr-60 to Tyr-80 threads the bilayer. Over Thr-81–Asp-97 the chain is Extracellular. Cys-96 and Cys-176 are disulfide-bonded. The helical transmembrane segment at Leu-98 to Phe-119 threads the bilayer. The Important for signaling signature appears at Asp-120 to Tyr-122. At Asp-120–Met-139 the chain is on the cytoplasmic side. A helical membrane pass occupies residues Ala-140–Trp-162. The Extracellular segment spans residues Gln-163–Ala-184. Residues Ala-185–Ile-209 form a helical membrane-spanning segment. Residues Ser-210–Arg-387 are Cytoplasmic-facing. The interval Lys-218–Ser-320 is disordered. Ser-232 is modified (phosphoserine). Over residues Ala-254–Val-270 the composition is skewed to basic and acidic residues. 2 stretches are compositionally biased toward polar residues: residues Asn-284–Ala-293 and Asp-304–Gly-313. Residues Thr-388–Asn-410 form a helical membrane-spanning segment. At Thr-411 to Pro-418 the chain is on the extracellular side. Cys-413 and Cys-416 form a disulfide bridge. Residues Asn-419–Leu-442 form a helical membrane-spanning segment. The Important for signaling signature appears at Asn-436 to Tyr-440. Residues Cys-443–Arg-466 are Cytoplasmic-facing. A phosphothreonine mark is found at Thr-446, Thr-450, and Thr-465.

The protein belongs to the G-protein coupled receptor 1 family. Muscarinic acetylcholine receptor subfamily. CHRM2 sub-subfamily. In terms of assembly, interacts with ARRB1 and ARRB2. Interacts with RACK1; the interaction regulates CHRM2 internalization. Post-translationally, phosphorylated in response to agonist treatment.

The protein localises to the cell membrane. It localises to the postsynaptic cell membrane. Its function is as follows. The muscarinic acetylcholine receptor mediates various cellular responses, including inhibition of adenylate cyclase, breakdown of phosphoinositides and modulation of potassium channels through the action of G proteins. Primary transducing effect is adenylate cyclase inhibition. The chain is Muscarinic acetylcholine receptor M2 (CHRM2) from Sus scrofa (Pig).